The sequence spans 492 residues: GDP-Man:Man(3)GlcNAc(2)-PP-Dol alpha-1,2-mannosyltransferase (492 aa).

At Met1 to Ser19 the chain is on the lumenal side. Residues Leu20–Trp40 traverse the membrane as a helical segment. Residues Val41–Lys233 are Cytoplasmic-facing. Positions Leu234–Val254 form an intramembrane region, helical. At Met255–His399 the chain is on the cytoplasmic side. Positions Phe400–Gly420 form an intramembrane region, helical. The Cytoplasmic portion of the chain corresponds to Gly421–Thr492.

Belongs to the glycosyltransferase group 1 family. Glycosyltransferase 4 subfamily.

The protein resides in the endoplasmic reticulum membrane. It carries out the reaction an alpha-D-Man-(1-&gt;3)-[alpha-D-Man-(1-&gt;6)]-beta-D-Man-(1-&gt;4)-beta-D-GlcNAc-(1-&gt;4)-alpha-D-GlcNAc-diphospho-di-trans,poly-cis-dolichol + 2 GDP-alpha-D-mannose = an alpha-D-Man-(1-&gt;2)-alpha-D-Man-(1-&gt;2)-alpha-D-Man-(1-&gt;3)-[alpha-D-Man-(1-&gt;6)]-beta-D-Man-(1-&gt;4)-beta-D-GlcNAc-(1-&gt;4)-alpha-D-GlcNAc-diphospho-di-trans,poly-cis-dolichol + 2 GDP + 2 H(+). It participates in protein modification; protein glycosylation. In terms of biological role, GDP-Man:Man(3)GlcNAc(2)-PP-Dol alpha-1,2-mannosyltransferase that operates in the biosynthetic pathway of dolichol-linked oligosaccharides, the glycan precursors employed in protein asparagine (N)-glycosylation. The assembly of dolichol-linked oligosaccharides begins on the cytosolic side of the endoplasmic reticulum membrane and finishes in its lumen. The sequential addition of sugars to dolichol pyrophosphate produces dolichol-linked oligosaccharides containing fourteen sugars, including two GlcNAcs, nine mannoses and three glucoses. Once assembled, the oligosaccharide is transferred from the lipid to nascent proteins by oligosaccharyltransferases. Catalyzes, on the cytoplasmic face of the endoplasmic reticulum, the addition of the fourth and fifth mannose residues to the dolichol-linked oligosaccharide chain, to produce Man(5)GlcNAc(2)-PP-dolichol core oligosaccharide. Man(5)GlcNAc(2)-PP-dolichol is a substrate for ALG3, the following enzyme in the biosynthetic pathway. The sequence is that of GDP-Man:Man(3)GlcNAc(2)-PP-Dol alpha-1,2-mannosyltransferase from Mus musculus (Mouse).